A 397-amino-acid polypeptide reads, in one-letter code: Phosphoglycerate kinase (397 aa).

Residues 21–23 (DFN), Arg37, 60–63 (HLGR), Arg119, and Arg152 each bind substrate. ATP-binding positions include Lys203, Gly294, Glu325, and 354–357 (GGDS).

Belongs to the phosphoglycerate kinase family. As to quaternary structure, monomer.

The protein localises to the cytoplasm. The enzyme catalyses (2R)-3-phosphoglycerate + ATP = (2R)-3-phospho-glyceroyl phosphate + ADP. It functions in the pathway carbohydrate degradation; glycolysis; pyruvate from D-glyceraldehyde 3-phosphate: step 2/5. The chain is Phosphoglycerate kinase from Prosthecochloris aestuarii (strain DSM 271 / SK 413).